Reading from the N-terminus, the 172-residue chain is Large ribosomal subunit protein uL10 (172 aa).

The protein belongs to the universal ribosomal protein uL10 family. In terms of assembly, part of the ribosomal stalk of the 50S ribosomal subunit. The N-terminus interacts with L11 and the large rRNA to form the base of the stalk. The C-terminus forms an elongated spine to which L12 dimers bind in a sequential fashion forming a multimeric L10(L12)X complex.

Its function is as follows. Forms part of the ribosomal stalk, playing a central role in the interaction of the ribosome with GTP-bound translation factors. The sequence is that of Large ribosomal subunit protein uL10 from Parvibaculum lavamentivorans (strain DS-1 / DSM 13023 / NCIMB 13966).